We begin with the raw amino-acid sequence, 118 residues long: NADH-ubiquinone oxidoreductase chain 3 (118 aa).

The next 2 helical transmembrane spans lie at 4–24 and 87–107; these read FAPI…PLGV and IDPF…IGSL.

Belongs to the complex I subunit 3 family.

It localises to the mitochondrion membrane. It catalyses the reaction a ubiquinone + NADH + 5 H(+)(in) = a ubiquinol + NAD(+) + 4 H(+)(out). Core subunit of the mitochondrial membrane respiratory chain NADH dehydrogenase (Complex I) that is believed to belong to the minimal assembly required for catalysis. Complex I functions in the transfer of electrons from NADH to the respiratory chain. The immediate electron acceptor for the enzyme is believed to be ubiquinone. The polypeptide is NADH-ubiquinone oxidoreductase chain 3 (ND3) (Panax ginseng (Korean ginseng)).